The primary structure comprises 282 residues: uncharacterized protein (282 aa).

The 136-residue stretch at 5-140 (DELIKLHEEH…SFQPYTKKLD (136 aa)) folds into the N-acetyltransferase domain.

The protein belongs to the acetyltransferase family.

This is an uncharacterized protein from Bacillus subtilis (strain 168).